The chain runs to 416 residues: Inhibitor of growth protein 3 (416 aa).

Disordered stretches follow at residues 126 to 165 (LDTP…PEKK), 177 to 198 (SDAS…STNN), and 283 to 319 (QTLT…SSSL). A compositionally biased stretch (basic residues) spans 136 to 152 (HHVHSHSSGEKRKHIPS). Positions 156-165 (STTDHVPEKK) are enriched in basic and acidic residues. A compositionally biased stretch (polar residues) spans 177 to 187 (SDASKENTAGC). Low complexity-rich tracts occupy residues 189–198 (TNLSSSSTNN), 283–293 (QTLTSSATTDS), and 302–319 (NNKS…SSSL). The PHD-type zinc finger occupies 358-407 (PRYCICNQVSYGEMVGCDNQDCPIEWFHYGCVGLSEAPKGKWYCPQCTAA). Zn(2+) contacts are provided by C361, C363, C374, C379, H385, C388, C401, and C404.

This sequence belongs to the ING family. In terms of assembly, interacts with H3K4me3 and to a lesser extent with H3K4me2. Component of the NuA4 histone acetyltransferase complex.

It localises to the nucleus. Component of the NuA4 histone acetyltransferase (HAT) complex which is involved in transcriptional activation of select genes principally by acetylation of nucleosomal histone H4 and H2A. This modification may both alter nucleosome - DNA interactions and promote interaction of the modified histones with other proteins which positively regulate transcription. NuA4 may also play a direct role in DNA repair when directly recruited to sites of DNA damage. In Xenopus laevis (African clawed frog), this protein is Inhibitor of growth protein 3 (ing3).